The primary structure comprises 394 residues: MARDYYEILGVSRDSSKEEIKRAYRRLARKYHPDVNKEPGAEDRFKEINRAYEVLSDDELRARYDRFGEAGLSGAAAAASGFQDFAGIGGFADLFESFFTNFAGGGVGYSRSRQGPVRGDDLRFDLKLEFLEAIFGGEKQIRISHLEVCPVCGGSGAKPGTDVKVCPTCGGAGQVRRATRTPFGNFTQVSICPTCGGAGRVLEEPCYNCNGEGLAQTTKKLRINIPAGVDSGTRLRVSGEGDAGRRGGPPGDLYVYLFVEPDPDFQRDGLTIFSQVRVSYLQAILGAKVLVPTVDSKAGLEEEAELTIPAGSQPGTVLTLEGKGVPRLGNPMLRGDHKITLVVEIPTRISSEERELLMRLAELHGERINKRDGFLGGLLRGLAQMPGNREREEE.

The J domain occupies 4 to 68 (DYYEILGVSR…ELRARYDRFG (65 aa)). The CR-type zinc finger occupies 136–218 (GGEKQIRISH…CNGEGLAQTT (83 aa)). Residues C149, C152, C166, C169, C192, C195, C206, and C209 each contribute to the Zn(2+) site. CXXCXGXG motif repeat units lie at residues 149–156 (CPVCGGSG), 166–173 (CPTCGGAG), 192–199 (CPTCGGAG), and 206–213 (CYNCNGEG).

Belongs to the DnaJ family. Homodimer. The cofactor is Zn(2+).

Its subcellular location is the cytoplasm. In terms of biological role, participates actively in the response to hyperosmotic and heat shock by preventing the aggregation of stress-denatured proteins and by disaggregating proteins, also in an autonomous, DnaK-independent fashion. Unfolded proteins bind initially to DnaJ; upon interaction with the DnaJ-bound protein, DnaK hydrolyzes its bound ATP, resulting in the formation of a stable complex. GrpE releases ADP from DnaK; ATP binding to DnaK triggers the release of the substrate protein, thus completing the reaction cycle. Several rounds of ATP-dependent interactions between DnaJ, DnaK and GrpE are required for fully efficient folding. Also involved, together with DnaK and GrpE, in the DNA replication of plasmids through activation of initiation proteins. The polypeptide is Chaperone protein DnaJ (Synechococcus sp. (strain JA-3-3Ab) (Cyanobacteria bacterium Yellowstone A-Prime)).